A 189-amino-acid polypeptide reads, in one-letter code: MNPVSLIFLAFAMSTDAFAAAIGKGSSLDRPRLSEALRTGIIFGVIEAITPLVGWLLGQAASQFVADWDHWIAFVLLVLLGLHMIHNGLRADHATEQEKPGQHSFWILAVTALATSIDALAVGVGLAFVDVNIFLAAGAIGLATMTMVTLGTMLGRALGAVTGKRAEMVGGVVLILVGATILYEHLSAA.

6 helical membrane-spanning segments follow: residues 3-23 (PVSL…AAIG), 41-61 (IIFG…GQAA), 65-85 (VADW…LHMI), 106-128 (WILA…GLAF), 141-161 (GLAT…LGAV), and 168-188 (MVGG…HLSA).

Belongs to the MntP (TC 9.B.29) family.

It is found in the cell inner membrane. Probably functions as a manganese efflux pump. This Pseudomonas aeruginosa (strain UCBPP-PA14) protein is Putative manganese efflux pump MntP.